Here is a 169-residue protein sequence, read N- to C-terminus: Cell division inhibitor SulA (169 aa).

The ftsZ binding stretch occupies residues 106–112 (ALRTGNY). The lon protease binding stretch occupies residues 162-169 (KIHSNLYH).

This sequence belongs to the SulA family. As to quaternary structure, interacts with FtsZ. In terms of processing, is rapidly cleaved and degraded by the Lon protease once DNA damage is repaired.

Functionally, component of the SOS system and an inhibitor of cell division. Accumulation of SulA causes rapid cessation of cell division and the appearance of long, non-septate filaments. In the presence of GTP, binds a polymerization-competent form of FtsZ in a 1:1 ratio, thus inhibiting FtsZ polymerization and therefore preventing it from participating in the assembly of the Z ring. This mechanism prevents the premature segregation of damaged DNA to daughter cells during cell division. The protein is Cell division inhibitor SulA of Salmonella arizonae (strain ATCC BAA-731 / CDC346-86 / RSK2980).